Here is a 173-residue protein sequence, read N- to C-terminus: RNA pyrophosphohydrolase (173 aa).

In terms of domain architecture, Nudix hydrolase spans 6–149 (GFRANVGIIL…KRGVYRRALQ (144 aa)). Residues 38–59 (GGIDRGETPMDAMYRELWEEVG) carry the Nudix box motif.

This sequence belongs to the Nudix hydrolase family. RppH subfamily. It depends on a divalent metal cation as a cofactor.

Functionally, accelerates the degradation of transcripts by removing pyrophosphate from the 5'-end of triphosphorylated RNA, leading to a more labile monophosphorylated state that can stimulate subsequent ribonuclease cleavage. In Psychrobacter arcticus (strain DSM 17307 / VKM B-2377 / 273-4), this protein is RNA pyrophosphohydrolase.